We begin with the raw amino-acid sequence, 114 residues long: FK506-binding protein 1 (114 aa).

The PPIase FKBP-type domain maps to Gly26–Asn114.

Belongs to the FKBP-type PPIase family. FKBP1 subfamily.

The protein resides in the cytoplasm. It catalyses the reaction [protein]-peptidylproline (omega=180) = [protein]-peptidylproline (omega=0). Its activity is regulated as follows. Inhibited by both FK506 and rapamycin. Functionally, PPIases accelerate the folding of proteins. It catalyzes the cis-trans isomerization of proline imidic peptide bonds in oligopeptides. The sequence is that of FK506-binding protein 1 (FPR1) from Eremothecium gossypii (strain ATCC 10895 / CBS 109.51 / FGSC 9923 / NRRL Y-1056) (Yeast).